Reading from the N-terminus, the 322-residue chain is N-acetyl-gamma-glutamyl-phosphate reductase 2 (322 aa).

The active site involves Cys-117.

The protein belongs to the NAGSA dehydrogenase family. Type 2 subfamily.

The protein resides in the cytoplasm. The enzyme catalyses N-acetyl-L-glutamate 5-semialdehyde + phosphate + NADP(+) = N-acetyl-L-glutamyl 5-phosphate + NADPH + H(+). Its pathway is amino-acid biosynthesis; L-arginine biosynthesis; N(2)-acetyl-L-ornithine from L-glutamate: step 3/4. In terms of biological role, catalyzes the NADPH-dependent reduction of N-acetyl-5-glutamyl phosphate to yield N-acetyl-L-glutamate 5-semialdehyde. In Nostoc sp. (strain PCC 7120 / SAG 25.82 / UTEX 2576), this protein is N-acetyl-gamma-glutamyl-phosphate reductase 2.